Consider the following 510-residue polypeptide: ATP synthase subunit alpha 1 (510 aa).

Residue Gly169 to Thr176 coordinates ATP.

Belongs to the ATPase alpha/beta chains family. As to quaternary structure, F-type ATPases have 2 components, CF(1) - the catalytic core - and CF(0) - the membrane proton channel. CF(1) has five subunits: alpha(3), beta(3), gamma(1), delta(1), epsilon(1). CF(0) has three main subunits: a(1), b(2) and c(9-12). The alpha and beta chains form an alternating ring which encloses part of the gamma chain. CF(1) is attached to CF(0) by a central stalk formed by the gamma and epsilon chains, while a peripheral stalk is formed by the delta and b chains.

It localises to the cell inner membrane. It carries out the reaction ATP + H2O + 4 H(+)(in) = ADP + phosphate + 5 H(+)(out). Produces ATP from ADP in the presence of a proton gradient across the membrane. The alpha chain is a regulatory subunit. The protein is ATP synthase subunit alpha 1 of Marinomonas sp. (strain MWYL1).